The chain runs to 138 residues: Protein E6 (138 aa).

Zinc fingers lie at residues 25-61 (CNFCTGFLTYQELLEFDYKDFNLLWKDGFVFGCCAAC) and 98-134 (CLICLKRLDLLEKLDICAQHREFHRVRNRWKGVCRHC).

This sequence belongs to the papillomaviridae E6 protein family. In terms of assembly, forms homodimers. Interacts with ubiquitin-protein ligase UBE3A/E6-AP; this interaction stimulates UBE3A ubiquitin activity. Interacts with host BAK1.

The protein localises to the host cytoplasm. It localises to the host nucleus. Functionally, plays a major role in the induction and maintenance of cellular transformation. E6 associates with host UBE3A/E6-AP ubiquitin-protein ligase and modulates its activity. Protects host keratinocytes from apoptosis by mediating the degradation of host BAK1. May also inhibit host immune response. The polypeptide is Protein E6 (Homo sapiens (Human)).